The following is a 386-amino-acid chain: 3-ketoacyl-CoA thiolase (386 aa).

Residue C91 is the Acyl-thioester intermediate of the active site. Active-site proton acceptor residues include H342 and C372.

The protein belongs to the thiolase-like superfamily. Thiolase family. In terms of assembly, heterotetramer of two alpha chains (FadB) and two beta chains (FadA).

The protein resides in the cytoplasm. It carries out the reaction an acyl-CoA + acetyl-CoA = a 3-oxoacyl-CoA + CoA. Its pathway is lipid metabolism; fatty acid beta-oxidation. Its function is as follows. Catalyzes the final step of fatty acid oxidation in which acetyl-CoA is released and the CoA ester of a fatty acid two carbons shorter is formed. The protein is 3-ketoacyl-CoA thiolase of Colwellia psychrerythraea (strain 34H / ATCC BAA-681) (Vibrio psychroerythus).